We begin with the raw amino-acid sequence, 279 residues long: MKEIVHEKIQNLDLKEYLINFIDEKNHFSFGILSFKHYVALSGNRSSHILTLAGGIELLILAFDIFDDLEDEDNIEIKWMKIDPSLALNAATTLYTLGLETICSISNSAEFHRLTLKYALNAMQGQHEDLRNSPETEEECIQMMKQKAGSLTAMSAVLAAMLANGEFNQTIEDYAYKIGIIKQLENDYYGLVNDQRSDIRKKRKTLIYLFLNRKFNEASEKILKLINSHTSYHSFISDSSKFDELLFEAGLNQYVSMLIKLYEEEITASMNQLNINIKL.

Asp-67 and Asp-71 together coordinate Mg(2+).

This sequence belongs to the FPP/GGPP synthase family. Mg(2+) serves as cofactor.

The protein localises to the cell membrane. The enzyme catalyses L-tryptophyl-[protein] + (2E)-geranyl diphosphate = (2S,3R)-3-geranyl-2,3-dihydro-2,N(alpha)-cyclo-L-tryptophyl-[protein] + diphosphate. Its function is as follows. Part of a major quorum-sensing system that regulates the development of genetic competence. Involved in the maturation of the competence pheromone ComX. Acts by catalyzing the transfer of a geranyl group on the ComX pheromone. Cannot use farnesyl diphosphate (FPP). In Bacillus spizizenii (Bacillus subtilis subsp. spizizenii), this protein is Tryptophan prenyltransferase ComQ.